A 382-amino-acid polypeptide reads, in one-letter code: Probable dual-specificity RNA methyltransferase RlmN (382 aa).

The active-site Proton acceptor is Glu-118. One can recognise a Radical SAM core domain in the interval 124-370 (YDKRVTMCIS…TTVRDTRGSD (247 aa)). A disulfide bridge links Cys-131 with Cys-375. 3 residues coordinate [4Fe-4S] cluster: Cys-138, Cys-142, and Cys-145. Residues 196–197 (GE), Ser-230, 253–255 (SLH), and Asn-332 each bind S-adenosyl-L-methionine. The active-site S-methylcysteine intermediate is the Cys-375.

It belongs to the radical SAM superfamily. RlmN family. [4Fe-4S] cluster is required as a cofactor.

The protein localises to the cytoplasm. The enzyme catalyses adenosine(2503) in 23S rRNA + 2 reduced [2Fe-2S]-[ferredoxin] + 2 S-adenosyl-L-methionine = 2-methyladenosine(2503) in 23S rRNA + 5'-deoxyadenosine + L-methionine + 2 oxidized [2Fe-2S]-[ferredoxin] + S-adenosyl-L-homocysteine. The catalysed reaction is adenosine(37) in tRNA + 2 reduced [2Fe-2S]-[ferredoxin] + 2 S-adenosyl-L-methionine = 2-methyladenosine(37) in tRNA + 5'-deoxyadenosine + L-methionine + 2 oxidized [2Fe-2S]-[ferredoxin] + S-adenosyl-L-homocysteine. Functionally, specifically methylates position 2 of adenine 2503 in 23S rRNA and position 2 of adenine 37 in tRNAs. This is Probable dual-specificity RNA methyltransferase RlmN from Kocuria rhizophila (strain ATCC 9341 / DSM 348 / NBRC 103217 / DC2201).